A 150-amino-acid polypeptide reads, in one-letter code: Seminal ribonuclease (150 aa).

An N-terminal signal peptide occupies residues 1–26; the sequence is MALKSLVVLPLLVLVLLLVRVQPSLG. Residues K33 and R36 each contribute to the substrate site. H38 acts as the Proton acceptor in catalysis. 4 disulfide bridges follow: C52/C110, C66/C121, C84/C136, and C91/C98. Substrate-binding positions include 67-71 and K92; that span reads KPVNT. N93 is subject to Deamidated asparagine; by deterioration. R111 lines the substrate pocket. Catalysis depends on H145, which acts as the Proton donor.

The protein belongs to the pancreatic ribonuclease family. Homodimer; disulfide-linked. In terms of tissue distribution, seminal plasma. Can reach 3% of the protein content of this fluid.

Its subcellular location is the secreted. It catalyses the reaction an [RNA] containing cytidine + H2O = an [RNA]-3'-cytidine-3'-phosphate + a 5'-hydroxy-ribonucleotide-3'-[RNA].. It carries out the reaction an [RNA] containing uridine + H2O = an [RNA]-3'-uridine-3'-phosphate + a 5'-hydroxy-ribonucleotide-3'-[RNA].. Its activity is regulated as follows. Allosteric regulation by both substrate and reaction products. This enzyme hydrolyzes both single- and double-stranded RNA. In Bos taurus (Bovine), this protein is Seminal ribonuclease (SRN).